Here is a 119-residue protein sequence, read N- to C-terminus: MARTSFKLEHPLERRQAESARIREKYSDRIPVIVEKADKTDVPEIDKKKYLVPADLTVGQFVYVVRKRIKLSPEKAIFVFVKNTLPPTASLMSAIYEENKDEDGFLYMTYSGENTFGSA.

The Phosphatidylethanolamine amidated glycine moiety is linked to residue glycine 117. The propeptide at 118–119 is removed in mature form; that stretch reads SA.

It belongs to the ATG8 family. In terms of assembly, interacts with ATG4. In terms of processing, the C-terminal 2 residues are removed by ATG4 to expose Gly-117 at the C-terminus. The C-terminal Gly is then amidated with phosphatidylethanolamine by an activating system similar to that for ubiquitin. Constitutively expressed.

Its subcellular location is the cytoplasmic vesicle. It localises to the autophagosome membrane. The protein resides in the vacuole membrane. The protein localises to the cytoplasm. It is found in the cytoskeleton. Ubiquitin-like modifier involved in cytoplasm to vacuole transport (Cvt) vesicles and autophagosomes formation. May mediate the delivery of the vesicles and autophagosomes to the vacuole via the microtubule cytoskeleton. Its function is as follows. Ubiquitin-like modifier involved in autophagosomes formation. May mediate the delivery of the autophagosomes to the vacuole via the microtubule cytoskeleton. The polypeptide is Autophagy-related protein 8A (ATG8A) (Oryza sativa subsp. indica (Rice)).